The primary structure comprises 143 residues: Ribosome-binding factor A (143 aa).

Residues 123-143 (DNSLQENYKDSDKETKVEKLR) are disordered.

It belongs to the RbfA family. In terms of assembly, monomer. Binds 30S ribosomal subunits, but not 50S ribosomal subunits or 70S ribosomes.

Its subcellular location is the cytoplasm. Functionally, one of several proteins that assist in the late maturation steps of the functional core of the 30S ribosomal subunit. Associates with free 30S ribosomal subunits (but not with 30S subunits that are part of 70S ribosomes or polysomes). Required for efficient processing of 16S rRNA. May interact with the 5'-terminal helix region of 16S rRNA. The protein is Ribosome-binding factor A of Francisella philomiragia subsp. philomiragia (strain ATCC 25017 / CCUG 19701 / FSC 153 / O#319-036).